Reading from the N-terminus, the 81-residue chain is Photosystem I iron-sulfur center (81 aa).

2 consecutive 4Fe-4S ferredoxin-type domains span residues 2–31 (SHSV…MIPW) and 39–68 (IASA…VRVY). Cysteine 11, cysteine 14, cysteine 17, cysteine 21, cysteine 48, cysteine 51, cysteine 54, and cysteine 58 together coordinate [4Fe-4S] cluster.

As to quaternary structure, the eukaryotic PSI reaction center is composed of at least 11 subunits. The cofactor is [4Fe-4S] cluster.

The protein resides in the plastid. It localises to the chloroplast thylakoid membrane. The catalysed reaction is reduced [plastocyanin] + hnu + oxidized [2Fe-2S]-[ferredoxin] = oxidized [plastocyanin] + reduced [2Fe-2S]-[ferredoxin]. Its function is as follows. Apoprotein for the two 4Fe-4S centers FA and FB of photosystem I (PSI); essential for photochemical activity. FB is the terminal electron acceptor of PSI, donating electrons to ferredoxin. The C-terminus interacts with PsaA/B/D and helps assemble the protein into the PSI complex. Required for binding of PsaD and PsaE to PSI. PSI is a plastocyanin-ferredoxin oxidoreductase, converting photonic excitation into a charge separation, which transfers an electron from the donor P700 chlorophyll pair to the spectroscopically characterized acceptors A0, A1, FX, FA and FB in turn. The sequence is that of Photosystem I iron-sulfur center from Phaseolus vulgaris (Kidney bean).